A 742-amino-acid polypeptide reads, in one-letter code: Alginate lyase (742 aa).

Residues 1 to 26 (MRLQPLFVSLALAAPCALLPTASLSA) form the signal peptide. Residues Arg-143, 153 to 156 (QVLN), Gln-204, His-208, and 263 to 266 (YYQR) contribute to the substrate site. The Proton donor role is filled by Tyr-264. Catalysis depends on His-418, which acts as the Proton acceptor. Residues His-420 and Asp-438 each coordinate Zn(2+). Arg-443 is a substrate binding site. Residue His-469 participates in Zn(2+) binding. Glu-669 serves as a coordination point for substrate.

It belongs to the polysaccharide lyase 17 family. As to quaternary structure, homodimer. Zn(2+) serves as cofactor.

It localises to the periplasm. The enzyme catalyses Cleavage of 4-deoxy-alpha-L-erythro-hex-4-enopyranuronoside oligosaccharides into 4-deoxy-alpha-L-erythro-hex-4-enopyranuronate monosaccharides.. Functionally, polysaccharide lyase that catalyzes the depolymerization of alginate via a beta-elimination mechanism, cleaving the beta-1,4 glycosidic bond between two adjacent sugar residues. Acts specifically on alginate and each of its block structures, with highest activity toward poly-beta-D-mannuronate (poly-ManA). Shows an exolytic mode of action, producing unsaturated monomers. Displays a very low activity against poly-beta-D-glucuronate (poly-GlcA), and is not active on poly-alpha-D-galacturonate, hyaluronan, heparin, heparan sulfate and chondroitin sulfate. The polypeptide is Alginate lyase (Stenotrophomonas maltophilia (strain K279a)).